The sequence spans 339 residues: Holliday junction branch migration complex subunit RuvB (339 aa).

The interval 1–180 (MTRTITPDMT…FGVISRLEFY (180 aa)) is large ATPase domain (RuvB-L). ATP contacts are provided by residues Leu-19, Arg-20, Gly-61, Lys-64, Thr-65, Thr-66, 127–129 (EDF), Arg-170, Tyr-180, and Arg-217. Thr-65 contacts Mg(2+). The segment at 181-251 (TIEELAFIIT…VVQDALALLE (71 aa)) is small ATPAse domain (RuvB-S). The tract at residues 254–339 (HMGFDYMDRM…EPPQGKLFQD (86 aa)) is head domain (RuvB-H). 2 residues coordinate DNA: Arg-309 and Arg-314.

Belongs to the RuvB family. Homohexamer. Forms an RuvA(8)-RuvB(12)-Holliday junction (HJ) complex. HJ DNA is sandwiched between 2 RuvA tetramers; dsDNA enters through RuvA and exits via RuvB. An RuvB hexamer assembles on each DNA strand where it exits the tetramer. Each RuvB hexamer is contacted by two RuvA subunits (via domain III) on 2 adjacent RuvB subunits; this complex drives branch migration. In the full resolvosome a probable DNA-RuvA(4)-RuvB(12)-RuvC(2) complex forms which resolves the HJ.

Its subcellular location is the cytoplasm. It catalyses the reaction ATP + H2O = ADP + phosphate + H(+). In terms of biological role, the RuvA-RuvB-RuvC complex processes Holliday junction (HJ) DNA during genetic recombination and DNA repair, while the RuvA-RuvB complex plays an important role in the rescue of blocked DNA replication forks via replication fork reversal (RFR). RuvA specifically binds to HJ cruciform DNA, conferring on it an open structure. The RuvB hexamer acts as an ATP-dependent pump, pulling dsDNA into and through the RuvAB complex. RuvB forms 2 homohexamers on either side of HJ DNA bound by 1 or 2 RuvA tetramers; 4 subunits per hexamer contact DNA at a time. Coordinated motions by a converter formed by DNA-disengaged RuvB subunits stimulates ATP hydrolysis and nucleotide exchange. Immobilization of the converter enables RuvB to convert the ATP-contained energy into a lever motion, pulling 2 nucleotides of DNA out of the RuvA tetramer per ATP hydrolyzed, thus driving DNA branch migration. The RuvB motors rotate together with the DNA substrate, which together with the progressing nucleotide cycle form the mechanistic basis for DNA recombination by continuous HJ branch migration. Branch migration allows RuvC to scan DNA until it finds its consensus sequence, where it cleaves and resolves cruciform DNA. The sequence is that of Holliday junction branch migration complex subunit RuvB from Geotalea daltonii (strain DSM 22248 / JCM 15807 / FRC-32) (Geobacter daltonii).